The following is a 429-amino-acid chain: Adenylosuccinate synthetase (429 aa).

Residues 12 to 18 (GDEGKGK) and 40 to 42 (GHT) each bind GTP. The active-site Proton acceptor is D13. Mg(2+)-binding residues include D13 and G40. IMP is bound by residues 13–16 (DEGK), 38–41 (NAGH), T129, R143, Q223, T238, and R302. Catalysis depends on H41, which acts as the Proton donor. Residue 298 to 304 (VVTGRKR) participates in substrate binding. GTP is bound by residues R304, 330–332 (KLD), and 412–414 (STS).

Belongs to the adenylosuccinate synthetase family. As to quaternary structure, homodimer. The cofactor is Mg(2+).

It localises to the cytoplasm. The enzyme catalyses IMP + L-aspartate + GTP = N(6)-(1,2-dicarboxyethyl)-AMP + GDP + phosphate + 2 H(+). It functions in the pathway purine metabolism; AMP biosynthesis via de novo pathway; AMP from IMP: step 1/2. In terms of biological role, plays an important role in the de novo pathway of purine nucleotide biosynthesis. Catalyzes the first committed step in the biosynthesis of AMP from IMP. The protein is Adenylosuccinate synthetase of Brucella suis (strain ATCC 23445 / NCTC 10510).